Consider the following 817-residue polypeptide: Transcription factor yanR (817 aa).

A DNA-binding region (zn(2)-C6 fungal-type) is located at residues 19–46; sequence CIVCRRRKVRCGREHPECANCVRMKENC. Disordered regions lie at residues 102-161, 180-218, and 733-775; these read GNVL…PQVD, HHASSRAGTSRTSSVSQDASPAVSESARAPSTSTSYSGL, and SLSS…VADS. A compositionally biased stretch (pro residues) spans 113–127; the sequence is LPRPTISPASAPPPQ. Residues 146–158 show a composition bias toward polar residues; it reads SSTILTPAPSSHP. The span at 184–195 shows a compositional bias: low complexity; that stretch reads SRAGTSRTSSVS. Polar residues-rich tracts occupy residues 208-217 and 748-760; these read APSTSTSYSG and EAPSTTTAPQMPS.

It is found in the nucleus. Its function is as follows. Transcription factor that regulates the expression of the gene cluster that mediates the biosynthesis of yanuthone D, a fungal isoprenoid epoxycyclohexenone that acts as an antibiotic against fungi and bacteria. The polypeptide is Transcription factor yanR (Aspergillus niger (strain ATCC 1015 / CBS 113.46 / FGSC A1144 / LSHB Ac4 / NCTC 3858a / NRRL 328 / USDA 3528.7)).